A 270-amino-acid chain; its full sequence is Putative phosphoenolpyruvate synthase regulatory protein (270 aa).

154–161 (GVSRAGKT) lines the ADP pocket.

Belongs to the pyruvate, phosphate/water dikinase regulatory protein family. PSRP subfamily.

The catalysed reaction is [pyruvate, water dikinase] + ADP = [pyruvate, water dikinase]-phosphate + AMP + H(+). It catalyses the reaction [pyruvate, water dikinase]-phosphate + phosphate + H(+) = [pyruvate, water dikinase] + diphosphate. In terms of biological role, bifunctional serine/threonine kinase and phosphorylase involved in the regulation of the phosphoenolpyruvate synthase (PEPS) by catalyzing its phosphorylation/dephosphorylation. This chain is Putative phosphoenolpyruvate synthase regulatory protein, found in Deinococcus geothermalis (strain DSM 11300 / CIP 105573 / AG-3a).